The sequence spans 157 residues: Probable cyclic pyranopterin monophosphate synthase (157 aa).

Substrate is bound by residues 75–77 and 111–112; these read MCH and ME. Asp-126 is an active-site residue.

Belongs to the MoaC family. In terms of assembly, homohexamer; trimer of dimers.

It catalyses the reaction (8S)-3',8-cyclo-7,8-dihydroguanosine 5'-triphosphate = cyclic pyranopterin phosphate + diphosphate. It participates in cofactor biosynthesis; molybdopterin biosynthesis. Its function is as follows. Catalyzes the conversion of (8S)-3',8-cyclo-7,8-dihydroguanosine 5'-triphosphate to cyclic pyranopterin monophosphate (cPMP). The protein is Probable cyclic pyranopterin monophosphate synthase of Methanosarcina mazei (strain ATCC BAA-159 / DSM 3647 / Goe1 / Go1 / JCM 11833 / OCM 88) (Methanosarcina frisia).